Here is a 187-residue protein sequence, read N- to C-terminus: Ribosome-recycling factor (187 aa).

The protein belongs to the RRF family.

The protein resides in the cytoplasm. In terms of biological role, responsible for the release of ribosomes from messenger RNA at the termination of protein biosynthesis. May increase the efficiency of translation by recycling ribosomes from one round of translation to another. This is Ribosome-recycling factor from Lactiplantibacillus plantarum (strain ATCC BAA-793 / NCIMB 8826 / WCFS1) (Lactobacillus plantarum).